A 271-amino-acid chain; its full sequence is Ferric vulnibactin reductase VuuB (271 aa).

One can recognise an FAD-binding FR-type domain in the interval 8–131; the sequence is VYPMLLDFVR…IGPAGPDPLI (124 aa).

It belongs to the SIP oxidoreductase family. In terms of assembly, monomer. FAD is required as a cofactor.

It is found in the cytoplasm. The catalysed reaction is 2 a Fe(II)-siderophore + NAD(+) + H(+) = 2 a Fe(III)-siderophore + NADH. Ferric-siderophore reductase involved in iron removal from the siderophores after their transport into the cell. Acts as a major ferric-vulnibactin reductase catalyzing the reduction of Fe(3+)-vulnibactin, a catecholate siderophore synthesized by V.vulnificus. Catalyzes reduction of Fe(3+)-aerobactin, a citrate-hydroxamate siderophore produced by other bacteria, in the absence of IutB. Catalyzes reduction of Fe(3+)-vibriobactin in vitro. No activity with ferrioxamine B or Fe(3+)-enterobactin. Catalyzes reduction of ferric chelating compounds Fe(3+)-nitrilotriacetic acid (NTA), Fe(3+)-citrate and Fe(3+)-EDTA as well as non-complexed FeCl3 in the presence of NADH as its electron donor and FAD as its cofactor in vitro. Highest activity with Fe(3+)-NTA as electron acceptor. This chain is Ferric vulnibactin reductase VuuB, found in Vibrio vulnificus.